The primary structure comprises 724 residues: WD repeat-containing protein 91 (724 aa).

Positions 178-207 form a coiled coil; it reads FDSEVQRITSLQEDNEQLRQTVFALQGESR. The tract at residues 249-365 is disordered; that stretch reads SRNFFSTFLP…PDQTDSANQT (117 aa). Composition is skewed to polar residues over residues 270-279 and 303-315; these read GPQSSPTQSA and SVSS…STSH. The residue at position 274 (Ser274) is a Phosphoserine. Over residues 322-333 the composition is skewed to basic and acidic residues; that stretch reads QDHEKERKELFS. Polar residues predominate over residues 349–365; that stretch reads DTQTEAPPDQTDSANQT. WD repeat units follow at residues 389 to 428, 431 to 471, 499 to 532, 537 to 576, 579 to 618, 641 to 679, and 686 to 724; these read EHHS…QTKA, MSKS…CLYE, AHSG…QQLQ, PGPV…SALS, AHDG…VKQS, VQVP…AGLE, and GHKA…AQKP.

It belongs to the WD repeat WDR91 family.

The protein localises to the early endosome membrane. Its subcellular location is the late endosome membrane. Functionally, functions as a negative regulator of the PI3 kinase/PI3K activity associated with endosomal membranes. By modifying the phosphatidylinositol 3-phosphate/PtdInsP3 content of endosomal membranes may regulate endosome fusion, recycling, sorting and early to late endosome transport. The protein is WD repeat-containing protein 91 (wdr91) of Danio rerio (Zebrafish).